Reading from the N-terminus, the 312-residue chain is Glycerol-3-phosphate dehydrogenase [NAD(P)+] (312 aa).

Tryptophan 11, arginine 30, arginine 31, and lysine 95 together coordinate NADPH. Residues lysine 95, glycine 123, and serine 125 each contribute to the sn-glycerol 3-phosphate site. Alanine 127 is an NADPH binding site. Residues lysine 177, aspartate 230, serine 240, arginine 241, and asparagine 242 each coordinate sn-glycerol 3-phosphate. The active-site Proton acceptor is lysine 177. Arginine 241 contributes to the NADPH binding site. Residues valine 265 and glutamate 267 each contribute to the NADPH site.

The protein belongs to the NAD-dependent glycerol-3-phosphate dehydrogenase family.

Its subcellular location is the cytoplasm. The enzyme catalyses sn-glycerol 3-phosphate + NAD(+) = dihydroxyacetone phosphate + NADH + H(+). It carries out the reaction sn-glycerol 3-phosphate + NADP(+) = dihydroxyacetone phosphate + NADPH + H(+). It functions in the pathway membrane lipid metabolism; glycerophospholipid metabolism. Its function is as follows. Catalyzes the reduction of the glycolytic intermediate dihydroxyacetone phosphate (DHAP) to sn-glycerol 3-phosphate (G3P), the key precursor for phospholipid synthesis. The chain is Glycerol-3-phosphate dehydrogenase [NAD(P)+] from Helicobacter pylori (strain P12).